Here is a 909-residue protein sequence, read N- to C-terminus: Protein translocase subunit SecA (909 aa).

ATP is bound by residues Gln-87, 105–109 (GEGKT), and Asp-507. The tract at residues 834–909 (EAVEEQRRRQ…KYKQCCGKLS (76 aa)) is disordered. A compositionally biased stretch (basic and acidic residues) spans 837-848 (EEQRRRQGDMQY). Over residues 859–871 (QGAGGEGAAGGTA) the composition is skewed to gly residues. Zn(2+)-binding residues include Cys-893, Cys-895, Cys-904, and Cys-905.

The protein belongs to the SecA family. In terms of assembly, monomer and homodimer. Part of the essential Sec protein translocation apparatus which comprises SecA, SecYEG and auxiliary proteins SecDF-YajC and YidC. Zn(2+) is required as a cofactor.

Its subcellular location is the cell inner membrane. It localises to the cytoplasm. The enzyme catalyses ATP + H2O + cellular proteinSide 1 = ADP + phosphate + cellular proteinSide 2.. Part of the Sec protein translocase complex. Interacts with the SecYEG preprotein conducting channel. Has a central role in coupling the hydrolysis of ATP to the transfer of proteins into and across the cell membrane, serving both as a receptor for the preprotein-SecB complex and as an ATP-driven molecular motor driving the stepwise translocation of polypeptide chains across the membrane. This is Protein translocase subunit SecA from Alkalilimnicola ehrlichii (strain ATCC BAA-1101 / DSM 17681 / MLHE-1).